Here is a 67-residue protein sequence, read N- to C-terminus: Large ribosomal subunit protein bL35 (67 aa).

Residues 1–11 (MPKLKTRKAAA) show a composition bias toward basic residues. A disordered region spans residues 1–22 (MPKLKTRKAAAKRFEATGSGKK).

The protein belongs to the bacterial ribosomal protein bL35 family.

This Microcystis aeruginosa (strain NIES-843 / IAM M-2473) protein is Large ribosomal subunit protein bL35.